Reading from the N-terminus, the 931-residue chain is MTTGFLQKIFGSRNQRLVKQYQKTVAAINALETQIETLTDDQLRGKTGEFRQRIAAGESLDKLLPEAFAVCREASRRVLKMRHFDVQMIGGMVLHYGKIAEMRTGEGKTLVATLAAYLNALAGRGVHVVTVNDYLAQRDAEWMGRLYNFLGLSVGINLSGMEHDQKQAAYAADITYGTNNEFGFDYLRDNMVYETDSRVQRPLNFAVVDEVDSILIDEARTPLIISGQAEDHTELYVRMNALPPLLERQIGEEKADGTGVEKPGDYTLDEKGRQVFLTESGHEKAERMLAEWGLIGDGESLYAPQNITLMHHVYAALRAHTLFHRDQHYVVQNDEVIIVDEFTGRLMPGRRWSDGLHQAVEAKEHVKIQSENQTLASITFQNYFRMYAKLSGMTGTADTEAYEFNEIYGLETVVIPTNRPPKRIDKQDQIYKTAKERYDAVIRDIRECHERGQPVLVGTTSIENSELLSHLLKQAGLPHEVLNAKQHAREAAIVAEAGRPKRITIATNMAGRGTDIVLGGNVEKQAAFIEADESIPADEKARRIQQLHDEWETLHEQVKTAGGLHIIGTERHESRRIDNQLRGRAGRQGDPGSSRFYLSLEDPLLRIFAGDRVRAIMDRLKMPEGEAIEAGIVTRSIESAQRKVEARNFDIRKQLLEYDDVSNDQRKVIYQQRNELLEAHDIAETIGAMRHGVISEVVRQFVPAGSIEEQWDLPELEETLRNDWQLDLAIQEMVNESSSINADEILDAVTTAADEHYEAKVALVGRESFSAFERSIMLQTLDRLWREHLAALDHLRQGIHLRGYAQKNPKQEYKREAFELFAAMLDAVKQEVTRIVMNVQIQSPEQLEEAAEQIEEQGGQLGNVEFQHADFAAAAAAATAGGAVVADATAEMVSHAMSHSGPAGEVPRVGRNDPCPCGSGKKYKHCHGKLN.

ATP contacts are provided by residues Gln-87, 105-109, and Asp-515; that span reads GEGKT. The Zn(2+) site is built by Cys-915, Cys-917, Cys-926, and His-927.

It belongs to the SecA family. In terms of assembly, monomer and homodimer. Part of the essential Sec protein translocation apparatus which comprises SecA, SecYEG and auxiliary proteins SecDF-YajC and YidC. The cofactor is Zn(2+).

It localises to the cell inner membrane. The protein localises to the cytoplasm. It carries out the reaction ATP + H2O + cellular proteinSide 1 = ADP + phosphate + cellular proteinSide 2.. Functionally, part of the Sec protein translocase complex. Interacts with the SecYEG preprotein conducting channel. Has a central role in coupling the hydrolysis of ATP to the transfer of proteins into and across the cell membrane, serving both as a receptor for the preprotein-SecB complex and as an ATP-driven molecular motor driving the stepwise translocation of polypeptide chains across the membrane. The sequence is that of Protein translocase subunit SecA from Burkholderia pseudomallei (strain 1106a).